Reading from the N-terminus, the 1710-residue chain is Chromodomain-helicase-DNA-binding protein 1 (1710 aa).

Residues 1–10 show a composition bias toward basic and acidic residues; that stretch reads MNGHSDEESV. The interval 1-252 is disordered; it reads MNGHSDEESV…KEDEEMKTDS (252 aa). The span at 35 to 63 shows a compositional bias: low complexity; that stretch reads SSGSSSDGSSSQSGSSDSDSGSESGSQSE. The segment covering 67–85 has biased composition (basic and acidic residues); the sequence is DTSRENKVQAKPPKVDGAE. Residues 105–121 show a composition bias toward low complexity; sequence QQQQQQQQQHQASSNSG. Positions 122 to 136 are enriched in acidic residues; it reads SEEDSSSSEDSDDSS. Residues 152–163 are compositionally biased toward low complexity; that stretch reads SGSGSPSQSGSD. The segment covering 187 to 210 has biased composition (basic residues); that stretch reads KVKSRKPQNRSKSKNGKKILGQKK. A phosphoserine mark is found at serine 215 and serine 216. A compositionally biased stretch (acidic residues) spans 215 to 226; sequence SSEEDDDEEDYD. The residue at position 237 (threonine 237) is a Phosphothreonine. Serine 241 carries the post-translational modification Phosphoserine. Threonine 250 carries the phosphothreonine modification. Phosphoserine is present on serine 252. 2 Chromo domains span residues 272–364 and 389–452; these read ETIE…RWLK and QIVE…TPFK. Serine 471 is modified (phosphoserine). The region spanning 493–663 is the Helicase ATP-binding domain; that stretch reads AHSWCKGNSC…WSLLHFIMPE (171 aa). Residue 506–513 participates in ATP binding; the sequence is DEMGLGKT. Positions 614-617 match the DEAH box motif; that stretch reads DEAH. Residues 792 to 943 form the Helicase C-terminal domain; that stretch reads LLDKLLIRLR…HLVIQRMDTT (152 aa). A phosphoserine mark is found at serine 1025, serine 1040, serine 1081, serine 1085, serine 1096, serine 1098, serine 1100, and serine 1102. The disordered stretch occupies residues 1080–1120; that stretch reads ISFNGSEGRRSRSRRYSGSDSDSISEGKRPKKRGRPRTIPR. The segment covering 1108 to 1117 has biased composition (basic residues); it reads RPKKRGRPRT. Serine 1161 carries the phosphoserine modification. Disordered stretches follow at residues 1321-1408 and 1502-1710; these read EALS…ESEE and KKRQ…SRKT. Positions 1329 to 1345 are enriched in basic residues; sequence SKRRKARAKKNKAMKSI. Residues serine 1353, serine 1355, serine 1356, serine 1360, serine 1363, serine 1371, and serine 1373 each carry the phosphoserine modification. Residues 1370 to 1379 show a composition bias toward basic and acidic residues; it reads LSESKSDGRE. The segment at 1409–1511 is CHD1 helical C-terminal domain (CHCT); the sequence is LDQKTFSICK…KKRQESQQNS (103 aa). Over residues 1507–1516 the composition is skewed to low complexity; it reads SQQNSDQNSN. Composition is skewed to basic and acidic residues over residues 1523-1573 and 1582-1670; these read RNPD…DSRK and GKDH…DHRA. Phosphoserine is present on serine 1622. Repeat copies occupy residues 1628-1632, 1634-1638, and 1640-1644. Residues 1628-1644 are 3 X 5 AA repeats of H-S-D-H-R; it reads HSDHRSHSDHRLHSDHR. 3 positions are modified to phosphoserine: serine 1677, arginine 1688, and serine 1689. Over residues 1690 to 1701 the composition is skewed to basic and acidic residues; it reads PFEHSVEHKSTP.

The protein belongs to the SNF2/RAD54 helicase family. In terms of assembly, component of the SAGA complex. Interacts with BCLAF1, NCoR, SRP20 and SAFB. Specifically interacts with methylated H3K4me2 and H3K4me3. Interacts with the FACT complex, the PAF complex and the U2 snRNP. Interacts directly with PAF1, SFA3A1, SFA3A2, SFA3A3, SNF2 and SSRP1. As to expression, expressed in many tissues including in the brain, where the highest level of expression is found in the cerebellum and basal ganglia.

It is found in the nucleus. The protein localises to the cytoplasm. It carries out the reaction ATP + H2O = ADP + phosphate + H(+). In terms of biological role, ATP-dependent chromatin-remodeling factor which functions as substrate recognition component of the transcription regulatory histone acetylation (HAT) complex SAGA. Regulates polymerase II transcription. Also required for efficient transcription by RNA polymerase I, and more specifically the polymerase I transcription termination step. Regulates negatively DNA replication. Not only involved in transcription-related chromatin-remodeling, but also required to maintain a specific chromatin configuration across the genome. Is also associated with histone deacetylase (HDAC) activity. Required for the bridging of SNF2, the FACT complex, the PAF complex as well as the U2 snRNP complex to H3K4me3. Functions to modulate the efficiency of pre-mRNA splicing in part through physical bridging of spliceosomal components to H3K4me3. Required for maintaining open chromatin and pluripotency in embryonic stem cells. This chain is Chromodomain-helicase-DNA-binding protein 1, found in Homo sapiens (Human).